The primary structure comprises 204 residues: Protein phosphatase 1 regulatory subunit 1B (204 aa).

The residue at position 1 (methionine 1) is an N-acetylmethionine. A disordered region spans residues 1 to 204 (MDPKDRKKIQ…QRPSPSEPGT (204 aa)). Threonine 34 bears the Phosphothreonine; by PKA mark. Positions 41 to 63 (LSEHSSPEEEASPHQRASGEGHH) are enriched in basic and acidic residues. Residues serine 45 and serine 46 each carry the phosphoserine modification. Phosphothreonine; by CDK5 is present on threonine 75. Residues 89 to 100 (HLQSISNLNENQ) are compositionally biased toward polar residues. Phosphoserine is present on serine 102. A compositionally biased stretch (basic and acidic residues) spans 109–118 (GELRELGYPR). Acidic residues-rich tracts occupy residues 119–138 (EEDE…EDSQ) and 170–183 (DESE…DQVE). Serine 137 is subject to Phosphoserine. Phosphoserine is present on serine 198.

The protein belongs to the protein phosphatase inhibitor 1 family. Dopamine- and cyclic AMP-regulated neuronal phosphoprotein. In terms of processing, phosphorylation of Thr-34 is required for activity.

It is found in the cytoplasm. In terms of biological role, inhibitor of protein-phosphatase 1. The chain is Protein phosphatase 1 regulatory subunit 1B (PPP1R1B) from Homo sapiens (Human).